Consider the following 76-residue polypeptide: Protein CASC2, isoforms 1/2 (76 aa).

The disordered stretch occupies residues 1-20 (MAGTRGLMLLGPGPVAGPRD).

This is Protein CASC2, isoforms 1/2 (CASC2) from Homo sapiens (Human).